Reading from the N-terminus, the 721-residue chain is Polyribonucleotide nucleotidyltransferase (721 aa).

Positions 495 and 501 each coordinate Mg(2+). The KH domain maps to 562 to 621 (PRLLSFRIDPELIGTVIGPGGRTIKGITERTNTKIDIEDSGIVTIASHDGAAADEAQKII). Residues 631 to 699 (GEVFSGSITR…NRGRINLTLR (69 aa)) form the S1 motif domain. A disordered region spans residues 698-721 (LRGVPQSGDGAGEEPQPTPVAPLS).

It belongs to the polyribonucleotide nucleotidyltransferase family. Mg(2+) serves as cofactor.

It localises to the cytoplasm. The enzyme catalyses RNA(n+1) + phosphate = RNA(n) + a ribonucleoside 5'-diphosphate. Its function is as follows. Involved in mRNA degradation. Catalyzes the phosphorolysis of single-stranded polyribonucleotides processively in the 3'- to 5'-direction. The polypeptide is Polyribonucleotide nucleotidyltransferase (Parasynechococcus marenigrum (strain WH8102)).